We begin with the raw amino-acid sequence, 394 residues long: uncharacterized protein (394 aa).

The protein belongs to the mycobacterial PPE family.

This is an uncharacterized protein from Mycobacterium tuberculosis (strain CDC 1551 / Oshkosh).